The primary structure comprises 532 residues: MSLSESLAKYGITGATNIVHNPSHEELFAAETQASLEGFEKGTVTEMGAVNVMTGVYTGRSPKDKFIVKNEASKEIWWTSDEFKNDNKPVTEEAWAQLKALAGKELSNKPLYVVDLFCGANENTRLKIRFVMEVAWQAHFVTNMFIRPTEEELKGFEPDFVVLNASKAKVENFKELGLNSETAVVFNLAEKMQIILNTWYGGEMKKGMFSMMNFYLPLQGIAAMHCSANTDLEGKNTAIFFGLSGTGKTTLSTDPKRLLIGDDEHGWDDDGVFNFEGGCYAKVINLSKENEPDIWGAIKRNALLENVTVDANGKVDFADKSVTENTRVSYPIFHIKNIVKPVSKAPAAKRVIFLSADAFGVLPPVSILSKEQTKYYFLSGFTAKLAGTERGITEPTPTFSSCFGAAFLTLPPTKYAEVLVKRMEASGAKAYLVNTGWNGTGKRISIKDTRGIIDAILDGSIDTANTATIPYFNFTVPTELKGVDTKILDPRNTYADASEWEVKAKDLAERFQKNFKKFESLGGDLVKAGPQL.

Substrate-binding residues include Arg60, Tyr200, and Lys206. ATP is bound by residues Lys206, His225, and 242–250; that span reads GLSGTGKTT. Lys206 and His225 together coordinate Mn(2+). Position 244 (Ser244) interacts with substrate. Residue Asp263 participates in Mn(2+) binding. ATP is bound by residues Glu291, Arg327, 443-444, and Thr449; that span reads RI. Arg327 serves as a coordination point for substrate.

It belongs to the phosphoenolpyruvate carboxykinase (ATP) family. As to quaternary structure, monomer. The cofactor is Mn(2+).

The protein localises to the cytoplasm. The catalysed reaction is oxaloacetate + ATP = phosphoenolpyruvate + ADP + CO2. Its pathway is carbohydrate biosynthesis; gluconeogenesis. Inhibited by p-chloromercuribenzoate. Functionally, involved in gluconeogenesis. Catalyzes the conversion of oxaloacetate (OAA) to phosphoenolpyruvate (PEP) through direct phosphoryl transfer between the nucleoside triphosphate and OAA. In Anaerobiospirillum succiniciproducens, this protein is Phosphoenolpyruvate carboxykinase (ATP).